Here is a 420-residue protein sequence, read N- to C-terminus: Mannose-1-phosphate guanylyltransferase regulatory subunit alpha (420 aa).

The substrate-binding domain stretch occupies residues 2-251; sequence LKAVILIGGP…DGIWSQIKSA (250 aa). 2 residues coordinate GDP-alpha-D-mannose: glutamate 85 and glutamine 247. A hexapeptide repeat domain region spans residues 273-420; that stretch reads LARHTAGGPR…SRSFTNQIIL (148 aa). The tract at residues 356 to 384 is C-loop; it reads TPNDPNPNDPRARMDSESLFKDGKLLPAI.

It belongs to the transferase hexapeptide repeat family. In terms of assembly, component of the GMPPA-GMPPB mannose-1-phosphate guanylyltransferase complex composed of 4 GMPPA subunits and 8 GMPPB subunits; the complex is organized into three layers, a central layer made up of 2 GMPPA dimers sandwiched between two layers each made up of 2 GMPPB dimers.

The protein localises to the cytoplasm. Functionally, regulatory subunit of the GMPPA-GMPPB mannose-1-phosphate guanylyltransferase complex; reduces the catalytic activity of GMPPB when part of the complex. Mediates allosteric feedback inhibition of GMPPB catalytic activity upon binding GDP-alpha-D-mannose. Together with GMPPB regulates GDP-alpha-D-mannose levels. The polypeptide is Mannose-1-phosphate guanylyltransferase regulatory subunit alpha (Gmppa) (Rattus norvegicus (Rat)).